Here is a 118-residue protein sequence, read N- to C-terminus: Non-specific lipid-transfer protein 3 (118 aa).

An N-terminal signal peptide occupies residues 1-25; the sequence is MARSMNLACVALVMCMVVIAPMAEA. Disulfide bonds link Cys29–Cys76, Cys39–Cys53, Cys54–Cys99, and Cys74–Cys113.

This sequence belongs to the plant LTP family.

Functionally, plant non-specific lipid-transfer proteins transfer phospholipids as well as galactolipids across membranes. May play a role in wax or cutin deposition in the cell walls of expanding epidermal cells and certain secretory tissues. The protein is Non-specific lipid-transfer protein 3 of Lens culinaris (Lentil).